We begin with the raw amino-acid sequence, 244 residues long: 3-deoxy-manno-octulosonate cytidylyltransferase (244 aa).

It belongs to the KdsB family.

Its subcellular location is the cytoplasm. It carries out the reaction 3-deoxy-alpha-D-manno-oct-2-ulosonate + CTP = CMP-3-deoxy-beta-D-manno-octulosonate + diphosphate. The protein operates within nucleotide-sugar biosynthesis; CMP-3-deoxy-D-manno-octulosonate biosynthesis; CMP-3-deoxy-D-manno-octulosonate from 3-deoxy-D-manno-octulosonate and CTP: step 1/1. It functions in the pathway bacterial outer membrane biogenesis; lipopolysaccharide biosynthesis. Functionally, activates KDO (a required 8-carbon sugar) for incorporation into bacterial lipopolysaccharide in Gram-negative bacteria. The polypeptide is 3-deoxy-manno-octulosonate cytidylyltransferase (Vesicomyosocius okutanii subsp. Calyptogena okutanii (strain HA)).